Here is a 454-residue protein sequence, read N- to C-terminus: MARLFGTDGVRGLANVDLTADMALGLAVAAASVLVEPGGNAHPRALVARDPRASGEFLSAAVVAGLASAGVDVLDIGVVPTPALAHLVDTSGADFGVMLSASHNPMPDNGLKIFARGGTKLPDDVEDVVERAYREGGGRRPTGAAVGRVHGGPDVEQDAQDTYVAHLLSTLPGGPGSLKGLHVVVDCANGAASAVSPRVLAEAGARVTTIFAAPDGLNINDGCGSTHLGPVTAAVLAHGADIGLAHDGDADRCLAVDARGNAVDGDQIMAVLTLALRDRGQLTDDTLVATVMSNLGLRLAMQREGVTMVETGVGDRYVLEALNAGGWSIGGEQSGHVVLPAHATTGDGVLTGLHLLARMAETGRSLEDLTGVVQRLPQVLVNVRGVDKSRAGSDAELLGAVADAERELGETGRVLLRPSGTEPLVRVMVEAAHTDHAQGVADRLADVVRKRLAL.

Residue serine 102 is the Phosphoserine intermediate of the active site. Serine 102, aspartate 247, aspartate 249, and aspartate 251 together coordinate Mg(2+). Serine 102 carries the post-translational modification Phosphoserine.

It belongs to the phosphohexose mutase family. Requires Mg(2+) as cofactor. In terms of processing, activated by phosphorylation.

The catalysed reaction is alpha-D-glucosamine 1-phosphate = D-glucosamine 6-phosphate. Catalyzes the conversion of glucosamine-6-phosphate to glucosamine-1-phosphate. This chain is Phosphoglucosamine mutase, found in Kineococcus radiotolerans (strain ATCC BAA-149 / DSM 14245 / SRS30216).